Reading from the N-terminus, the 240-residue chain is 1-(5-phosphoribosyl)-5-[(5-phosphoribosylamino)methylideneamino] imidazole-4-carboxamide isomerase (240 aa).

D8 acts as the Proton acceptor in catalysis. The active-site Proton donor is D129.

This sequence belongs to the HisA/HisF family.

The protein resides in the cytoplasm. The enzyme catalyses 1-(5-phospho-beta-D-ribosyl)-5-[(5-phospho-beta-D-ribosylamino)methylideneamino]imidazole-4-carboxamide = 5-[(5-phospho-1-deoxy-D-ribulos-1-ylimino)methylamino]-1-(5-phospho-beta-D-ribosyl)imidazole-4-carboxamide. It participates in amino-acid biosynthesis; L-histidine biosynthesis; L-histidine from 5-phospho-alpha-D-ribose 1-diphosphate: step 4/9. The chain is 1-(5-phosphoribosyl)-5-[(5-phosphoribosylamino)methylideneamino] imidazole-4-carboxamide isomerase from Clostridioides difficile (strain 630) (Peptoclostridium difficile).